A 242-amino-acid chain; its full sequence is 1-(5-phosphoribosyl)-5-[(5-phosphoribosylamino)methylideneamino] imidazole-4-carboxamide isomerase (242 aa).

Catalysis depends on Asp10, which acts as the Proton acceptor. Catalysis depends on Asp132, which acts as the Proton donor.

The protein belongs to the HisA/HisF family.

The protein resides in the cytoplasm. The catalysed reaction is 1-(5-phospho-beta-D-ribosyl)-5-[(5-phospho-beta-D-ribosylamino)methylideneamino]imidazole-4-carboxamide = 5-[(5-phospho-1-deoxy-D-ribulos-1-ylimino)methylamino]-1-(5-phospho-beta-D-ribosyl)imidazole-4-carboxamide. It participates in amino-acid biosynthesis; L-histidine biosynthesis; L-histidine from 5-phospho-alpha-D-ribose 1-diphosphate: step 4/9. This Streptococcus sanguinis (strain SK36) protein is 1-(5-phosphoribosyl)-5-[(5-phosphoribosylamino)methylideneamino] imidazole-4-carboxamide isomerase.